Reading from the N-terminus, the 340-residue chain is ATP-dependent 6-phosphofructokinase (340 aa).

An ATP-binding site is contributed by Gly11. 21 to 25 contacts ADP; that stretch reads RAVVR. ATP-binding positions include 72–73 and 102–105; these read RY and GDGS. Residue Asp103 coordinates Mg(2+). 125–127 contacts substrate; sequence TID. The active-site Proton acceptor is the Asp127. Arg154 lines the ADP pocket. Substrate-binding positions include Arg162 and 169–171; that span reads MGR. ADP contacts are provided by residues 185-187 and 213-215; these read GAD and KHH. Substrate is bound by residues Glu222, Arg244, and 250-253; that span reads HLLR.

This sequence belongs to the phosphofructokinase type A (PFKA) family. ATP-dependent PFK group I subfamily. Prokaryotic clade 'B1' sub-subfamily. Homotetramer. The cofactor is Mg(2+).

It localises to the cytoplasm. The enzyme catalyses beta-D-fructose 6-phosphate + ATP = beta-D-fructose 1,6-bisphosphate + ADP + H(+). It participates in carbohydrate degradation; glycolysis; D-glyceraldehyde 3-phosphate and glycerone phosphate from D-glucose: step 3/4. Its activity is regulated as follows. Allosterically activated by ADP and other diphosphonucleosides, and allosterically inhibited by phosphoenolpyruvate. In terms of biological role, catalyzes the phosphorylation of D-fructose 6-phosphate to fructose 1,6-bisphosphate by ATP, the first committing step of glycolysis. In Streptococcus agalactiae serotype Ia (strain ATCC 27591 / A909 / CDC SS700), this protein is ATP-dependent 6-phosphofructokinase.